The sequence spans 200 residues: Peroxiredoxin (200 aa).

The 161-residue stretch at 6 to 166 folds into the Thioredoxin domain; the sequence is ARIGHLAPGF…ILRLVQAFQF (161 aa). The active-site Cysteine sulfenic acid (-SOH) intermediate is Cys52.

This sequence belongs to the peroxiredoxin family. AhpC/Prx1 subfamily. In terms of assembly, homodimer; disulfide-linked, upon oxidation.

It catalyses the reaction a hydroperoxide + [thioredoxin]-dithiol = an alcohol + [thioredoxin]-disulfide + H2O. Functionally, thiol-specific peroxidase that catalyzes the reduction of hydrogen peroxide and organic hydroperoxides to water and alcohols, respectively. Plays a role in cell protection against oxidative stress by detoxifying peroxides and as sensor of hydrogen peroxide-mediated signaling events. The sequence is that of Peroxiredoxin from Oncorhynchus mykiss (Rainbow trout).